A 382-amino-acid chain; its full sequence is Glycerate dehydrogenase (382 aa).

Residues 175-176, 271-273, and Asp297 contribute to the NAD(+) site; these read RI and CSR. Residue Arg273 is part of the active site. Glu302 is an active-site residue. Catalysis depends on His320, which acts as the Proton donor. 320 to 323 is a binding site for NAD(+); it reads HIAS.

This sequence belongs to the D-isomer specific 2-hydroxyacid dehydrogenase family.

It localises to the peroxisome. The enzyme catalyses (R)-glycerate + NAD(+) = 3-hydroxypyruvate + NADH + H(+). The protein operates within photosynthesis; photorespiration; 3-phospho-D-glycerate from glycine: step 3/4. The protein is Glycerate dehydrogenase (HPR-A) of Cucumis sativus (Cucumber).